The following is a 550-amino-acid chain: Dihydroxy-acid dehydratase (550 aa).

Asp78 provides a ligand contact to Mg(2+). [2Fe-2S] cluster is bound at residue Cys119. Residues Asp120 and Lys121 each coordinate Mg(2+). Lys121 is subject to N6-carboxylysine. Position 191 (Cys191) interacts with [2Fe-2S] cluster. Glu440 contacts Mg(2+). Ser466 acts as the Proton acceptor in catalysis.

It belongs to the IlvD/Edd family. In terms of assembly, homodimer. [2Fe-2S] cluster serves as cofactor. It depends on Mg(2+) as a cofactor.

It catalyses the reaction (2R)-2,3-dihydroxy-3-methylbutanoate = 3-methyl-2-oxobutanoate + H2O. The catalysed reaction is (2R,3R)-2,3-dihydroxy-3-methylpentanoate = (S)-3-methyl-2-oxopentanoate + H2O. It participates in amino-acid biosynthesis; L-isoleucine biosynthesis; L-isoleucine from 2-oxobutanoate: step 3/4. The protein operates within amino-acid biosynthesis; L-valine biosynthesis; L-valine from pyruvate: step 3/4. Functionally, functions in the biosynthesis of branched-chain amino acids. Catalyzes the dehydration of (2R,3R)-2,3-dihydroxy-3-methylpentanoate (2,3-dihydroxy-3-methylvalerate) into 2-oxo-3-methylpentanoate (2-oxo-3-methylvalerate) and of (2R)-2,3-dihydroxy-3-methylbutanoate (2,3-dihydroxyisovalerate) into 2-oxo-3-methylbutanoate (2-oxoisovalerate), the penultimate precursor to L-isoleucine and L-valine, respectively. This Methanococcus aeolicus (strain ATCC BAA-1280 / DSM 17508 / OCM 812 / Nankai-3) protein is Dihydroxy-acid dehydratase.